Consider the following 309-residue polypeptide: L-lactate dehydrogenase 2 (309 aa).

NAD(+) is bound by residues V16, D37, Y67, and 81-82 (GV). R90 lines the substrate pocket. S103 contacts NAD(+). A substrate-binding site is contributed by 122–125 (NPVD). T145 provides a ligand contact to NAD(+). 150–153 (DTAR) contributes to the substrate binding site. H177 serves as the catalytic Proton acceptor. Position 227 (T227) interacts with substrate.

It belongs to the LDH/MDH superfamily. LDH family. As to quaternary structure, homotetramer.

Its subcellular location is the cytoplasm. The enzyme catalyses (S)-lactate + NAD(+) = pyruvate + NADH + H(+). Its pathway is fermentation; pyruvate fermentation to lactate; (S)-lactate from pyruvate: step 1/1. Its function is as follows. Catalyzes the conversion of lactate to pyruvate. The polypeptide is L-lactate dehydrogenase 2 (Lactiplantibacillus plantarum (strain ATCC BAA-793 / NCIMB 8826 / WCFS1) (Lactobacillus plantarum)).